Here is a 254-residue protein sequence, read N- to C-terminus: tRNA pseudouridine synthase A (254 aa).

The active-site Nucleophile is the aspartate 52. Residue tyrosine 111 coordinates substrate.

This sequence belongs to the tRNA pseudouridine synthase TruA family. As to quaternary structure, homodimer.

It catalyses the reaction uridine(38/39/40) in tRNA = pseudouridine(38/39/40) in tRNA. Functionally, formation of pseudouridine at positions 38, 39 and 40 in the anticodon stem and loop of transfer RNAs. This is tRNA pseudouridine synthase A from Rhizorhabdus wittichii (strain DSM 6014 / CCUG 31198 / JCM 15750 / NBRC 105917 / EY 4224 / RW1) (Sphingomonas wittichii).